Consider the following 336-residue polypeptide: Holliday junction branch migration complex subunit RuvB (336 aa).

A large ATPase domain (RuvB-L) region spans residues 1–182; that stretch reads MKERIVNLET…FGMSFRMQFY (182 aa). Residues Leu-21, Arg-22, Gly-63, Lys-66, Thr-67, Ser-68, 129 to 131, Arg-172, Tyr-182, and Arg-219 each bind ATP; that span reads EDF. Thr-67 contributes to the Mg(2+) binding site. The tract at residues 183 to 253 is small ATPAse domain (RuvB-S); sequence SPSELALIIK…ITLHALNELG (71 aa). Positions 256–336 are head domain (RuvB-H); it reads ELGFDEADLA…IPTLKSQTLF (81 aa). Positions 310 and 315 each coordinate DNA.

This sequence belongs to the RuvB family. In terms of assembly, homohexamer. Forms an RuvA(8)-RuvB(12)-Holliday junction (HJ) complex. HJ DNA is sandwiched between 2 RuvA tetramers; dsDNA enters through RuvA and exits via RuvB. An RuvB hexamer assembles on each DNA strand where it exits the tetramer. Each RuvB hexamer is contacted by two RuvA subunits (via domain III) on 2 adjacent RuvB subunits; this complex drives branch migration. In the full resolvosome a probable DNA-RuvA(4)-RuvB(12)-RuvC(2) complex forms which resolves the HJ.

The protein resides in the cytoplasm. The enzyme catalyses ATP + H2O = ADP + phosphate + H(+). Functionally, the RuvA-RuvB-RuvC complex processes Holliday junction (HJ) DNA during genetic recombination and DNA repair, while the RuvA-RuvB complex plays an important role in the rescue of blocked DNA replication forks via replication fork reversal (RFR). RuvA specifically binds to HJ cruciform DNA, conferring on it an open structure. The RuvB hexamer acts as an ATP-dependent pump, pulling dsDNA into and through the RuvAB complex. RuvB forms 2 homohexamers on either side of HJ DNA bound by 1 or 2 RuvA tetramers; 4 subunits per hexamer contact DNA at a time. Coordinated motions by a converter formed by DNA-disengaged RuvB subunits stimulates ATP hydrolysis and nucleotide exchange. Immobilization of the converter enables RuvB to convert the ATP-contained energy into a lever motion, pulling 2 nucleotides of DNA out of the RuvA tetramer per ATP hydrolyzed, thus driving DNA branch migration. The RuvB motors rotate together with the DNA substrate, which together with the progressing nucleotide cycle form the mechanistic basis for DNA recombination by continuous HJ branch migration. Branch migration allows RuvC to scan DNA until it finds its consensus sequence, where it cleaves and resolves cruciform DNA. This Helicobacter pylori (strain G27) protein is Holliday junction branch migration complex subunit RuvB.